A 491-amino-acid chain; its full sequence is UDP-N-acetylmuramoyl-L-alanyl-D-glutamate--2,6-diaminopimelate ligase (491 aa).

UDP-N-acetyl-alpha-D-muramoyl-L-alanyl-D-glutamate is bound at residue serine 30. Residue 108 to 114 (GTNGKTT) participates in ATP binding. UDP-N-acetyl-alpha-D-muramoyl-L-alanyl-D-glutamate contacts are provided by residues asparagine 149, 150 to 151 (TT), serine 177, glutamine 183, and arginine 185. Lysine 217 carries the post-translational modification N6-carboxylysine. Residues arginine 383, 407–410 (DNPR), glycine 458, and glutamate 462 each bind meso-2,6-diaminopimelate. The short motif at 407–410 (DNPR) is the Meso-diaminopimelate recognition motif element.

Belongs to the MurCDEF family. MurE subfamily. It depends on Mg(2+) as a cofactor. Carboxylation is probably crucial for Mg(2+) binding and, consequently, for the gamma-phosphate positioning of ATP.

Its subcellular location is the cytoplasm. The catalysed reaction is UDP-N-acetyl-alpha-D-muramoyl-L-alanyl-D-glutamate + meso-2,6-diaminopimelate + ATP = UDP-N-acetyl-alpha-D-muramoyl-L-alanyl-gamma-D-glutamyl-meso-2,6-diaminopimelate + ADP + phosphate + H(+). The protein operates within cell wall biogenesis; peptidoglycan biosynthesis. In terms of biological role, catalyzes the addition of meso-diaminopimelic acid to the nucleotide precursor UDP-N-acetylmuramoyl-L-alanyl-D-glutamate (UMAG) in the biosynthesis of bacterial cell-wall peptidoglycan. The chain is UDP-N-acetylmuramoyl-L-alanyl-D-glutamate--2,6-diaminopimelate ligase from Listeria innocua serovar 6a (strain ATCC BAA-680 / CLIP 11262).